A 461-amino-acid chain; its full sequence is Cysteine--tRNA ligase (461 aa).

Residue cysteine 28 participates in Zn(2+) binding. The short motif at isoleucine 30–histidine 40 is the 'HIGH' region element. Zn(2+)-binding residues include cysteine 209, histidine 234, and glutamate 238. Positions lysine 266–serine 270 match the 'KMSKS' region motif. Lysine 269 is a binding site for ATP.

This sequence belongs to the class-I aminoacyl-tRNA synthetase family. As to quaternary structure, monomer. The cofactor is Zn(2+).

Its subcellular location is the cytoplasm. The catalysed reaction is tRNA(Cys) + L-cysteine + ATP = L-cysteinyl-tRNA(Cys) + AMP + diphosphate. This is Cysteine--tRNA ligase from Escherichia coli (strain K12 / MC4100 / BW2952).